The sequence spans 390 residues: Nucleosome assembly protein 1-like 1 (390 aa).

Basic and acidic residues predominate over residues 1 to 10 (MADIDNKEQS). The tract at residues 1–32 (MADIDNKEQSELDQDLEDVEEVEEEETGEETK) is disordered. Ala2 is modified (N-acetylalanine). Ser10 carries the post-translational modification Phosphoserine. The segment covering 11–28 (ELDQDLEDVEEVEEEETG) has biased composition (acidic residues). Residues Thr62 and Thr64 each carry the phosphothreonine modification. Phosphoserine is present on Ser69. At Lys116 the chain carries N6-acetyllysine. The NAP1L motif signature appears at 125-150 (YEPTEEECEWKPDEEDEVSEELKEKA). Over residues 131–143 (ECEWKPDEEDEVS) the composition is skewed to acidic residues. The interval 131-163 (ECEWKPDEEDEVSEELKEKAKIEDEKKDEEKED) is disordered. A Phosphoserine modification is found at Ser143. Residues 144–163 (EELKEKAKIEDEKKDEEKED) show a composition bias toward basic and acidic residues. Residues 272-278 (IKKKQKH) carry the Nuclear localization signal motif. Over residues 345 to 375 (AIEDDDDDYDEEGEEADEEGEEEGDEENDPD) the composition is skewed to acidic residues. A disordered region spans residues 345–390 (AIEDDDDDYDEEGEEADEEGEEEGDEENDPDYDPKKDQNPAECKQQ). Glu358 and Glu359 each carry 5-glutamyl polyglycine. The segment covering 376 to 390 (YDPKKDQNPAECKQQ) has biased composition (basic and acidic residues). Residue Cys387 is modified to Cysteine methyl ester. The S-farnesyl cysteine moiety is linked to residue Cys387. The propeptide at 388–390 (KQQ) is removed in mature form.

Belongs to the nucleosome assembly protein (NAP) family. In terms of assembly, homodimer. The dimer binds strongly and sequentially to single and double H2A-H2B heterodimers. Interacts with ERCC6; this interaction increases ERCC6 processivity. Interacts with RAD54. Interacts with SETD1A. Post-translationally, polyglycylated by TTLL10 on glutamate residues, resulting in polyglycine chains on the gamma-carboxyl group. Both polyglutamylation and polyglycylation modifications can coexist on the same protein on adjacent residues, and lowering polyglycylation levels increases polyglutamylation, and reciprocally. In terms of processing, polyglutamylated by TTLL4 on glutamate residues, resulting in polyglutamate chains on the gamma-carboxyl group. Both polyglutamylation and polyglycylation modifications can coexist on the same protein on adjacent residues, and lowering polyglycylation levels increases polyglutamylation, and reciprocally.

It is found in the nucleus. It localises to the melanosome. The protein resides in the cytoplasm. Functionally, histone chaperone that plays a role in the nuclear import of H2A-H2B and nucleosome assembly. Also participates in several important DNA repair mechanisms: greatly enhances ERCC6-mediated chromatin remodeling which is essential for transcription-coupled nucleotide excision DNA repair. Also stimulates homologous recombination (HR) by RAD51 and RAD54 which is essential in mitotic DNA double strand break (DSB) repair. Plays a key role in the regulation of embryonic neurogenesis. Promotes the proliferation of neural progenitors and inhibits neuronal differentiation during cortical development. Regulates neurogenesis via the modulation of RASSF10; regulates RASSF10 expression by promoting SETD1A-mediated H3K4 methylation at the RASSF10 promoter. This chain is Nucleosome assembly protein 1-like 1 (Nap1l1), found in Rattus norvegicus (Rat).